The sequence spans 860 residues: JmjC domain-containing histone demethylation protein 1 (860 aa).

Disordered regions lie at residues methionine 1 to lysine 45, serine 117 to lysine 212, and aspartate 408 to isoleucine 440. The PHD-type zinc-finger motif lies at proline 23–arginine 116. Composition is skewed to basic and acidic residues over residues isoleucine 183–glutamine 192 and aspartate 408–glutamate 433. One can recognise a JmjC domain in the interval asparagine 416–isoleucine 579. Threonine 471 serves as a coordination point for substrate. Histidine 474 and aspartate 476 together coordinate Fe cation. Lysine 491 serves as a coordination point for substrate. Fe cation is bound at residue histidine 547. Disordered regions lie at residues histidine 744–asparagine 795 and glycine 837–histidine 860. The segment covering glutamate 750–glutamine 763 has biased composition (polar residues). Residues proline 767–asparagine 795 show a composition bias toward low complexity.

The protein belongs to the JHDM1 histone demethylase family. Fe(2+) is required as a cofactor.

It is found in the nucleus. It carries out the reaction N(6),N(6)-dimethyl-L-lysyl(36)-[histone H3] + 2 2-oxoglutarate + 2 O2 = L-lysyl(36)-[histone H3] + 2 formaldehyde + 2 succinate + 2 CO2. In terms of biological role, histone demethylase that specifically demethylates 'Lys-36' of histone H3, thereby playing a central role in histone code. The polypeptide is JmjC domain-containing histone demethylation protein 1 (JHD1) (Cryptococcus neoformans var. neoformans serotype D (strain JEC21 / ATCC MYA-565) (Filobasidiella neoformans)).